The chain runs to 469 residues: Dynein axonemal assembly factor 11 (469 aa).

LRR repeat units lie at residues 20 to 43 (IFSL…DKWC), 44 to 65 (RELK…VSKL), 66 to 89 (KKLE…GCES), and 90 to 110 (LQKL…NSLQ). One can recognise an LRRCT domain in the interval 114–135 (HLRELYLVGNPCAEYEGYRQYV). Composition is skewed to basic and acidic residues over residues 179–213 (KRAA…RRWY) and 261–286 (SRLE…ELKK). 2 disordered regions span residues 179–290 (KRAA…KPPR) and 436–469 (KTQA…PPLM).

The protein belongs to the tilB family.

It is found in the cytoplasm. The protein localises to the cell projection. Its subcellular location is the cilium. It localises to the dynein axonemal particle. The protein resides in the flagellum. In terms of biological role, involved in dynein arm assembly, is important for expression and transporting outer dynein arm (ODA) proteins from the cytoplasm to the cilia. This chain is Dynein axonemal assembly factor 11 (dnaaf11), found in Xenopus laevis (African clawed frog).